The following is a 322-amino-acid chain: Olfactory receptor 1J1 (322 aa).

Residues methionine 1–alanine 25 lie on the Extracellular side of the membrane. Asparagine 5 carries N-linked (GlcNAc...) asparagine glycosylation. A helical transmembrane segment spans residues valine 26–isoleucine 49. Topologically, residues glutamine 50–threonine 57 are cytoplasmic. Residues proline 58–proline 79 traverse the membrane as a helical segment. Over lysine 80–glutamine 100 the chain is Extracellular. Cysteines 97 and 189 form a disulfide. Residues threonine 101–tyrosine 120 form a helical membrane-spanning segment. Over aspartate 121–serine 139 the chain is Cytoplasmic. A helical membrane pass occupies residues glutamine 140–leucine 158. At histidine 159–glutamine 196 the chain is on the extracellular side. Residues leucine 197–glycine 219 form a helical membrane-spanning segment. Residues histidine 220–lysine 236 lie on the Cytoplasmic side of the membrane. Residues alanine 237–tyrosine 259 form a helical membrane-spanning segment. Residues phenylalanine 260 to isoleucine 272 lie on the Extracellular side of the membrane. A helical transmembrane segment spans residues isoleucine 273 to leucine 292. Topologically, residues arginine 293–glycine 322 are cytoplasmic.

It belongs to the G-protein coupled receptor 1 family.

Its subcellular location is the cell membrane. In terms of biological role, odorant receptor. This Homo sapiens (Human) protein is Olfactory receptor 1J1.